The sequence spans 453 residues: uncharacterized protein (453 aa).

At M1–P110 the chain is on the cytoplasmic side. Residues I111–I131 form a helical membrane-spanning segment. At V132–K172 the chain is on the lumenal side. The chain crosses the membrane as a helical span at residues F173–I193. At G194 to A201 the chain is on the cytoplasmic side. Residues V202–V222 form a helical membrane-spanning segment. Residues G223 to N234 lie on the Lumenal side of the membrane. The chain crosses the membrane as a helical span at residues S235–T255. At H256–S269 the chain is on the cytoplasmic side. Residues L270–A290 form a helical membrane-spanning segment. Topologically, residues K291–K332 are lumenal. Residues I333–T353 traverse the membrane as a helical segment. Residues G354–V371 are Cytoplasmic-facing. Residues A372–I392 form a helical membrane-spanning segment. Over G393–S413 the chain is Lumenal. A helical transmembrane segment spans residues V414–I434. The Cytoplasmic portion of the chain corresponds to A435 to A453.

The protein belongs to the TPT transporter family.

It is found in the membrane. Able to suppress the functional loss of YPT1. May form a channel. Protein SLY41 is not essential for cell viability. The SLY41 gene is a multicopy suppressor. This is an uncharacterized protein from Saccharomyces cerevisiae (strain ATCC 204508 / S288c) (Baker's yeast).